The following is a 269-amino-acid chain: Ribosomal RNA small subunit methyltransferase J (269 aa).

S-adenosyl-L-methionine is bound by residues 125–126 and D179; that span reads ER.

It belongs to the methyltransferase superfamily. RsmJ family.

The protein resides in the cytoplasm. The catalysed reaction is guanosine(1516) in 16S rRNA + S-adenosyl-L-methionine = N(2)-methylguanosine(1516) in 16S rRNA + S-adenosyl-L-homocysteine + H(+). In terms of biological role, specifically methylates the guanosine in position 1516 of 16S rRNA. The sequence is that of Ribosomal RNA small subunit methyltransferase J from Pseudomonas savastanoi pv. phaseolicola (strain 1448A / Race 6) (Pseudomonas syringae pv. phaseolicola (strain 1448A / Race 6)).